The sequence spans 547 residues: Chaperonin GroEL (547 aa).

ATP contacts are provided by residues 30 to 33, K51, 87 to 91, G415, 479 to 481, and D495; these read TLGP, DGTTT, and NAA. Residues 524-547 are disordered; it reads APKKDEPTPPAAGGGMGGMGGMDF. A compositionally biased stretch (gly residues) spans 535–547; that stretch reads AGGGMGGMGGMDF.

This sequence belongs to the chaperonin (HSP60) family. In terms of assembly, forms a cylinder of 14 subunits composed of two heptameric rings stacked back-to-back. Interacts with the co-chaperonin GroES.

The protein localises to the cytoplasm. It carries out the reaction ATP + H2O + a folded polypeptide = ADP + phosphate + an unfolded polypeptide.. Together with its co-chaperonin GroES, plays an essential role in assisting protein folding. The GroEL-GroES system forms a nano-cage that allows encapsulation of the non-native substrate proteins and provides a physical environment optimized to promote and accelerate protein folding. The polypeptide is Chaperonin GroEL (Xylella fastidiosa (strain 9a5c)).